The primary structure comprises 325 residues: Casein kinase I isoform alpha (325 aa).

A2 is modified (N-acetylalanine). Phosphoserine is present on S4. N6-acetyllysine is present on K8. Residues 17–285 (YKLVRKIGSG…YLRQLFRILF (269 aa)) enclose the Protein kinase domain. ATP is bound by residues 23 to 31 (IGSGSFGDI) and K46. D136 functions as the Proton acceptor in the catalytic mechanism.

The protein belongs to the protein kinase superfamily. CK1 Ser/Thr protein kinase family. Casein kinase I subfamily. As to quaternary structure, interacts with the Axin complex. Interacts with TUT1, leading to TUT1 phosphorylation. Interacts with FAM83A, FAM83B, FAM83C, FAM83D, FAM83E, FAM83F, FAM83G and FAM83H (via DUF1669). Interaction with FAM83H recruits CSNK1A1 to keratin filaments. Post-translationally, phosphorylated by MTOR in response to mitogenic stimulation, leading to its activation.

Its subcellular location is the cytoplasm. The protein localises to the cytoskeleton. It is found in the microtubule organizing center. It localises to the centrosome. The protein resides in the chromosome. Its subcellular location is the centromere. The protein localises to the kinetochore. It is found in the nucleus speckle. It localises to the cilium basal body. The protein resides in the spindle. It catalyses the reaction L-seryl-[protein] + ATP = O-phospho-L-seryl-[protein] + ADP + H(+). It carries out the reaction L-threonyl-[protein] + ATP = O-phospho-L-threonyl-[protein] + ADP + H(+). Casein kinases are operationally defined by their preferential utilization of acidic proteins such as caseins as substrates. Can phosphorylate a large number of proteins. Participates in Wnt signaling. Phosphorylates CTNNB1 at 'Ser-45'. May phosphorylate PER1 and PER2. May play a role in segregating chromosomes during mitosis. May play a role in keratin cytoskeleton disassembly and thereby, it may regulate epithelial cell migration. Acts as a positive regulator of mTORC1 and mTORC2 signaling in response to nutrients by mediating phosphorylation of DEPTOR inhibitor. Acts as an inhibitor of NLRP3 inflammasome assembly by mediating phosphorylation of NLRP3. The sequence is that of Casein kinase I isoform alpha (CSNK1A1) from Oryctolagus cuniculus (Rabbit).